The primary structure comprises 344 residues: Aurora kinase B (344 aa).

The residue at position 35 (Thr35) is a Phosphothreonine. The disordered stretch occupies residues 46–65; that stretch reads NAQPTAAPGQKVVENSSGTP. A Phosphoserine modification is found at Ser62. Thr64 bears the Phosphothreonine mark. One can recognise a Protein kinase domain in the interval 77-327; the sequence is FEIGRPLGKG…LAQVSAHPWV (251 aa). Residues 83-91 and Lys106 contribute to the ATP site; that span reads LGKGKFGNV. Asp200 serves as the catalytic Proton acceptor. An N6-acetyllysine modification is found at Lys215. Phosphoserine is present on Ser227. Residue Thr232 is modified to Phosphothreonine; by autocatalysis.

This sequence belongs to the protein kinase superfamily. Ser/Thr protein kinase family. Aurora subfamily. In terms of assembly, component of the chromosomal passenger complex (CPC) composed of at least BIRC5/survivin, CDCA8/borealin, INCENP, AURKB or AURKC; predominantly independent AURKB- and AURKC-containing complexes exist. Associates with RACGAP1 during M phase. Interacts with SPDYC; this interaction may be required for proper localization of active, Thr-232-phosphorylated AURKB form during prometaphase and metaphase. Interacts with p53/TP53. Interacts (via the middle kinase domain) with NOC2L (via the N- and C-terminus domains). Interacts with CDCA1. Interacts with EVI5. Interacts with JTB. Interacts with NDC80. Interacts with PSMA3. Interacts with RNF2/RING1B. Interacts with SEPTIN1. Interacts with SIRT2. Interacts with TACC1. Interacts with TTC28. In terms of processing, the phosphorylation of Thr-232 requires the binding to INCENP and occurs by means of an autophosphorylation mechanism. Thr-232 phosphorylation is indispensable for the AURKB kinase activity. Acetylated at Lys-215 by KAT5 at kinetochores, increasing AURKB activity and promoting accurate chromosome segregation in mitosis. Post-translationally, ubiquitinated by different BCR (BTB-CUL3-RBX1) E3 ubiquitin ligase complexes. Ubiquitinated by the BCR(KLHL9-KLHL13) E3 ubiquitin ligase complex, ubiquitination leads to removal from mitotic chromosomes and is required for cytokinesis. During anaphase, the BCR(KLHL21) E3 ubiquitin ligase complex recruits the CPC complex from chromosomes to the spindle midzone and mediates the ubiquitination of AURKB. Ubiquitination of AURKB by BCR(KLHL21) E3 ubiquitin ligase complex may not lead to its degradation by the proteasome. Deubiquitinated by USP35; inhibiting CDH1-mediated degradation of AURKB.

It is found in the nucleus. The protein resides in the chromosome. It localises to the centromere. Its subcellular location is the kinetochore. The protein localises to the cytoplasm. It is found in the cytoskeleton. The protein resides in the spindle. It localises to the midbody. It catalyses the reaction L-seryl-[protein] + ATP = O-phospho-L-seryl-[protein] + ADP + H(+). The catalysed reaction is L-threonyl-[protein] + ATP = O-phospho-L-threonyl-[protein] + ADP + H(+). With respect to regulation, activity is greatly increased when AURKB is within the CPC complex. In particular, AURKB-phosphorylated INCENP acts as an activator of AURKB. Positive feedback between HASPIN and AURKB contributes to CPC localization. Its function is as follows. Serine/threonine-protein kinase component of the chromosomal passenger complex (CPC), a complex that acts as a key regulator of mitosis. The CPC complex has essential functions at the centromere in ensuring correct chromosome alignment and segregation and is required for chromatin-induced microtubule stabilization and spindle assembly. Involved in the bipolar attachment of spindle microtubules to kinetochores and is a key regulator for the onset of cytokinesis during mitosis. Required for central/midzone spindle assembly and cleavage furrow formation. Key component of the cytokinesis checkpoint, a process required to delay abscission to prevent both premature resolution of intercellular chromosome bridges and accumulation of DNA damage: phosphorylates CHMP4C, leading to retain abscission-competent VPS4 (VPS4A and/or VPS4B) at the midbody ring until abscission checkpoint signaling is terminated at late cytokinesis. AURKB phosphorylates the CPC complex subunits BIRC5/survivin, CDCA8/borealin and INCENP. Phosphorylation of INCENP leads to increased AURKB activity. Other known AURKB substrates involved in centromeric functions and mitosis are CENPA, DES/desmin, GPAF, KIF2C, NSUN2, RACGAP1, SEPTIN1, VIM/vimentin, HASPIN, and histone H3. A positive feedback loop involving HASPIN and AURKB contributes to localization of CPC to centromeres. Phosphorylation of VIM controls vimentin filament segregation in cytokinetic process, whereas histone H3 is phosphorylated at 'Ser-10' and 'Ser-28' during mitosis (H3S10ph and H3S28ph, respectively). AURKB is also required for kinetochore localization of BUB1 and SGO1. Phosphorylation of p53/TP53 negatively regulates its transcriptional activity. Key regulator of active promoters in resting B- and T-lymphocytes: acts by mediating phosphorylation of H3S28ph at active promoters in resting B-cells, inhibiting RNF2/RING1B-mediated ubiquitination of histone H2A and enhancing binding and activity of the USP16 deubiquitinase at transcribed genes. Acts as an inhibitor of CGAS during mitosis: catalyzes phosphorylation of the N-terminus of CGAS during the G2-M transition, blocking CGAS liquid phase separation and activation, and thereby preventing CGAS-induced autoimmunity. Phosphorylates KRT5 during anaphase and telophase. Phosphorylates ATXN10 which promotes phosphorylation of ATXN10 by PLK1 and may play a role in the regulation of cytokinesis and stimulating the proteasomal degradation of ATXN10. The protein is Aurora kinase B (AURKB) of Bos taurus (Bovine).